Here is a 286-residue protein sequence, read N- to C-terminus: NADPH-dependent 7-cyano-7-deazaguanine reductase (286 aa).

92 to 94 (IES) contributes to the substrate binding site. 94-95 (SK) is a binding site for NADPH. Catalysis depends on cysteine 194, which acts as the Thioimide intermediate. Aspartate 201 (proton donor) is an active-site residue. 233-234 (HE) is a binding site for substrate. Residue 262–263 (RG) participates in NADPH binding.

It belongs to the GTP cyclohydrolase I family. QueF type 2 subfamily. Homodimer.

The protein resides in the cytoplasm. It catalyses the reaction 7-aminomethyl-7-carbaguanine + 2 NADP(+) = 7-cyano-7-deazaguanine + 2 NADPH + 3 H(+). The protein operates within tRNA modification; tRNA-queuosine biosynthesis. Its function is as follows. Catalyzes the NADPH-dependent reduction of 7-cyano-7-deazaguanine (preQ0) to 7-aminomethyl-7-deazaguanine (preQ1). In Shewanella sp. (strain MR-7), this protein is NADPH-dependent 7-cyano-7-deazaguanine reductase.